We begin with the raw amino-acid sequence, 447 residues long: Cysteine--tRNA ligase (447 aa).

Zn(2+) is bound at residue C28. Positions 30 to 40 (PTVYNYIHVGN) match the 'HIGH' region motif. Residues C211, H236, and E240 each coordinate Zn(2+). The 'KMSKS' region signature appears at 268–272 (KMSKS). Position 271 (K271) interacts with ATP.

The protein belongs to the class-I aminoacyl-tRNA synthetase family. In terms of assembly, monomer. Zn(2+) is required as a cofactor.

It localises to the cytoplasm. The catalysed reaction is tRNA(Cys) + L-cysteine + ATP = L-cysteinyl-tRNA(Cys) + AMP + diphosphate. This Streptococcus mutans serotype c (strain ATCC 700610 / UA159) protein is Cysteine--tRNA ligase.